The following is a 462-amino-acid chain: ATP synthase subunit beta (462 aa).

Glycine 150 to threonine 157 contacts ATP.

The protein belongs to the ATPase alpha/beta chains family. As to quaternary structure, F-type ATPases have 2 components, CF(1) - the catalytic core - and CF(0) - the membrane proton channel. CF(1) has five subunits: alpha(3), beta(3), gamma(1), delta(1), epsilon(1). CF(0) has three main subunits: a(1), b(2) and c(9-12). The alpha and beta chains form an alternating ring which encloses part of the gamma chain. CF(1) is attached to CF(0) by a central stalk formed by the gamma and epsilon chains, while a peripheral stalk is formed by the delta and b chains.

It localises to the cell membrane. The catalysed reaction is ATP + H2O + 4 H(+)(in) = ADP + phosphate + 5 H(+)(out). Produces ATP from ADP in the presence of a proton gradient across the membrane. The catalytic sites are hosted primarily by the beta subunits. This Wigglesworthia glossinidia brevipalpis protein is ATP synthase subunit beta.